The sequence spans 660 residues: Threonine--tRNA ligase (660 aa).

The TGS domain maps to 1–64; that stretch reads MSHSVSLTFP…TEGRIEIVTR (64 aa). Positions 245 to 547 are catalytic; sequence DHRRLGREMD…LLENFAGHMP (303 aa). Residues Cys-341, His-392, and His-524 each coordinate Zn(2+).

It belongs to the class-II aminoacyl-tRNA synthetase family. As to quaternary structure, homodimer. Zn(2+) serves as cofactor.

Its subcellular location is the cytoplasm. The catalysed reaction is tRNA(Thr) + L-threonine + ATP = L-threonyl-tRNA(Thr) + AMP + diphosphate + H(+). Its function is as follows. Catalyzes the attachment of threonine to tRNA(Thr) in a two-step reaction: L-threonine is first activated by ATP to form Thr-AMP and then transferred to the acceptor end of tRNA(Thr). Also edits incorrectly charged L-seryl-tRNA(Thr). This chain is Threonine--tRNA ligase, found in Sinorhizobium medicae (strain WSM419) (Ensifer medicae).